Consider the following 117-residue polypeptide: Small ribosomal subunit protein bS6 (117 aa).

It belongs to the bacterial ribosomal protein bS6 family.

In terms of biological role, binds together with bS18 to 16S ribosomal RNA. This Trichodesmium erythraeum (strain IMS101) protein is Small ribosomal subunit protein bS6.